Consider the following 104-residue polypeptide: Biogenesis of lysosome-related organelles complex 1 subunit BLS1 (104 aa).

Belongs to the BLOC1S1 family. Component of the biogenesis of lysosome-related organelles complex-1 (BLOC-1).

The protein resides in the endosome. Component of the biogenesis of lysosome-related organelles complex-1 (BLOC-1), a complex involved in endosomal cargo sorting. The polypeptide is Biogenesis of lysosome-related organelles complex 1 subunit BLS1 (BLS1) (Kluyveromyces lactis (strain ATCC 8585 / CBS 2359 / DSM 70799 / NBRC 1267 / NRRL Y-1140 / WM37) (Yeast)).